Reading from the N-terminus, the 448-residue chain is Probable glycine dehydrogenase (decarboxylating) subunit 1 (448 aa).

Belongs to the GcvP family. N-terminal subunit subfamily. In terms of assembly, the glycine cleavage system is composed of four proteins: P, T, L and H. In this organism, the P 'protein' is a heterodimer of two subunits.

The catalysed reaction is N(6)-[(R)-lipoyl]-L-lysyl-[glycine-cleavage complex H protein] + glycine + H(+) = N(6)-[(R)-S(8)-aminomethyldihydrolipoyl]-L-lysyl-[glycine-cleavage complex H protein] + CO2. In terms of biological role, the glycine cleavage system catalyzes the degradation of glycine. The P protein binds the alpha-amino group of glycine through its pyridoxal phosphate cofactor; CO(2) is released and the remaining methylamine moiety is then transferred to the lipoamide cofactor of the H protein. This is Probable glycine dehydrogenase (decarboxylating) subunit 1 from Listeria monocytogenes serotype 4a (strain HCC23).